A 181-amino-acid polypeptide reads, in one-letter code: High mobility group protein B4 (181 aa).

The segment at residues 9–79 (PKVNVSSYIH…RYQQEMMNYI (71 aa)) is a DNA-binding region (HMG box 1). Basic residues predominate over residues 80-89 (GKRRKRRKRD). The interval 80–100 (GKRRKRRKRDPKAPRKPPSSF) is disordered. The segment at residues 93 to 161 (PRKPPSSFLL…KYFEEQEAYR (69 aa)) is a DNA-binding region (HMG box 2).

Belongs to the HMGB family. As to expression, expressed in adult germ cells (at protein level).

It is found in the nucleus. The protein resides in the chromosome. This chain is High mobility group protein B4 (Hmgb4), found in Mus musculus (Mouse).